The sequence spans 190 residues: GTP cyclohydrolase 1 (190 aa).

Zn(2+) contacts are provided by Cys-75, His-78, and Cys-146.

The protein belongs to the GTP cyclohydrolase I family. In terms of assembly, homomer.

It carries out the reaction GTP + H2O = 7,8-dihydroneopterin 3'-triphosphate + formate + H(+). The protein operates within cofactor biosynthesis; 7,8-dihydroneopterin triphosphate biosynthesis; 7,8-dihydroneopterin triphosphate from GTP: step 1/1. This chain is GTP cyclohydrolase 1, found in Campylobacter jejuni subsp. jejuni serotype O:6 (strain 81116 / NCTC 11828).